The primary structure comprises 905 residues: Toll-like receptor 3 (905 aa).

A signal peptide spans 1–25; it reads MKGCSSYLMYSFGGLLSLWILLVSS. Positions 26-52 constitute an LRRNT domain; it reads TNQCTVRYNVADCSHLKLTHIPDDLPS. Over 26–705 the chain is Lumenal; sequence TNQCTVRYNV…SCKDSAPFEL (680 aa). A disulfide bridge connects residues Cys29 and Cys38. N-linked (GlcNAc...) asparagine glycans are attached at residues Asn53, Asn58, and Asn71. LRR repeat units follow at residues 53 to 74, 77 to 98, 101 to 122, 125 to 146, 149 to 170, and 173 to 196; these read NITVLNLTHNQLRRLPPTNFTR, QLAILDAGFNSISKLEPELCQI, LLKVLNLQHNELSQISDQTFVF, NLTELDLMSNSIHKIKSNPFKN, NLIKLDLSHNGLSSTKLGTGVQ, and NLQELLLAKNKILALRSEELEFLG. Residues Cys96 and Cys123 are joined by a disulfide bond. N-linked (GlcNAc...) asparagine glycosylation occurs at Asn125. Residue Asn197 is glycosylated (N-linked (GlcNAc...) asparagine). An LRR 7 repeat occupies 199–220; it reads SLRKLDLSSNPLKEFSPGCFQT. 4 N-linked (GlcNAc...) asparagine glycosylation sites follow: Asn248, Asn253, Asn276, and Asn292. 15 LRR repeats span residues 250–271, 276–297, 300–321, 324–345, 357–378, 381–401, 409–430, 433–454, 458–479, 482–502, 508–529, 532–553, 564–585, 588–609, and 612–633; these read SIQNLSLANNQLLATSESTFSG, NLTQLDLSYNNLHDVGNGSFSY, SLRYLSLEYNNIQRLSPRSFYG, NLRYLSLKRAFTKQSVSLASHP, YLEYLNMDDNNIPSTKSNTFTG, SLKYLSLSKTFTSLQTLTNET, PLLTLNLTKNHISKIANGTFSW, QLRILDLGLNEIEQKLSGQEWR, NIFEIYLSYNKYLQLSTSSFAL, SLQRLMLRRVALKNVDISPSP, NLTILDLSNNNIANINEDLLEG, NLEILDFQHNNLARLWKRANPG, HLHILNLESNGLDEIPVGVFKN, ELKSINLGLNNLNKLEPFIFDD, and SLRSLNLQKNLITSVEKDVFGP. 3 N-linked (GlcNAc...) asparagine glycosylation sites follow: Asn399, Asn414, and Asn425. An N-linked (GlcNAc...) asparagine glycan is attached at Asn508. Residues 646-699 enclose the LRRCT domain; the sequence is NPFDCTCESISWFVNWINQTHTNISELSTHYLCNTPHHYYGFPLKLFDTSSCKD. 2 cysteine pairs are disulfide-bonded: Cys650–Cys678 and Cys652–Cys697. Asn663 and Asn668 each carry an N-linked (GlcNAc...) asparagine glycan. The chain crosses the membrane as a helical span at residues 706 to 726; that stretch reads LFIISTSMLLVFILVVLLIHI. At 727-905 the chain is on the cytoplasmic side; that stretch reads EGWRISFYWN…VALGSRNSAH (179 aa). In terms of domain architecture, TIR spans 755 to 898; that stretch reads FEYTAYIIHA…AFHHKLQVAL (144 aa). Tyr760 carries the phosphotyrosine modification. Residues Lys766, Lys813, and Lys832 each participate in a glycyl lysine isopeptide (Lys-Gly) (interchain with G-Cter in ubiquitin) cross-link. Tyr859 is modified (phosphotyrosine).

The protein belongs to the Toll-like receptor family. Monomer and homodimer; dimerization is triggered by ligand-binding, the signaling unit is composed of one ds-RNA of around 40 bp and two TLR3 molecules, and lateral clustering of signaling units along the length of the ds-RNA ligand is required for TLR3 signal transduction. Interacts (via transmembrane domain) with UNC93B1; the interaction is required for transport from the ER to the endosomes. Interacts with SRC; upon binding of double-stranded RNA. Interacts with TICAM1 (via the TIR domain) in response to poly(I:C) and this interaction is enhanced in the presence of WDFY1. The tyrosine-phosphorylated form (via TIR domain) interacts with WDFY1 (via WD repeat 2) in response to poly(I:C). Ubiquitinated by RNF170 at Lys-766 via 'Lys-48'-linked ubiquitin chains; leading to TLR3 proteasomal degradation. In terms of processing, TLR3 signaling requires a proteolytic cleavage mediated by cathepsins CTSB and CTSH, the cleavage occurs between amino acids 252 and 346. The cleaved form of TLR3 is the predominant form found in endosomes. Ubiquitinated by TRIM3; leading to recognition and sorting of polyubiquitinated TLR3 by the ESCRT complexes. Ubiquitinated by ZNRF1 via 'Lys-63'-linked ubiquitin chains; leading to TLR3 lysosomal trafficking and degradation. In terms of tissue distribution, highly expressed in lung. After intraperitoneal injection of lipopolysaccharide, highly expressed in brain, heart, kidney, liver, lung and spleen.

Its subcellular location is the endoplasmic reticulum membrane. The protein localises to the endosome membrane. The protein resides in the early endosome. Functionally, key component of innate and adaptive immunity. TLRs (Toll-like receptors) control host immune response against pathogens through recognition of molecular patterns specific to microorganisms. TLR3 is a nucleotide-sensing TLR which is activated by double-stranded RNA, a sign of viral infection. Acts via the adapter TRIF/TICAM1, leading to NF-kappa-B activation, IRF3 nuclear translocation, cytokine secretion and the inflammatory response. This chain is Toll-like receptor 3, found in Mus musculus (Mouse).